A 351-amino-acid chain; its full sequence is Anthranilate phosphoribosyltransferase (351 aa).

Residues G84, 87-88 (GD), 95-98 (NISS), 113-121 (KHGNRGASS), and A125 each bind 5-phospho-alpha-D-ribose 1-diphosphate. Residue G84 participates in anthranilate binding. Residue S97 coordinates Mg(2+). N116 serves as a coordination point for anthranilate. R171 lines the anthranilate pocket. 2 residues coordinate Mg(2+): D229 and K230.

This sequence belongs to the anthranilate phosphoribosyltransferase family. Homodimer. The cofactor is Mg(2+).

It carries out the reaction N-(5-phospho-beta-D-ribosyl)anthranilate + diphosphate = 5-phospho-alpha-D-ribose 1-diphosphate + anthranilate. The protein operates within amino-acid biosynthesis; L-tryptophan biosynthesis; L-tryptophan from chorismate: step 2/5. Catalyzes the transfer of the phosphoribosyl group of 5-phosphorylribose-1-pyrophosphate (PRPP) to anthranilate to yield N-(5'-phosphoribosyl)-anthranilate (PRA). The protein is Anthranilate phosphoribosyltransferase of Clavibacter michiganensis subsp. michiganensis (strain NCPPB 382).